Here is a 523-residue protein sequence, read N- to C-terminus: Glutamate--cysteine ligase (523 aa).

Belongs to the glutamate--cysteine ligase type 1 family. Type 1 subfamily.

It carries out the reaction L-cysteine + L-glutamate + ATP = gamma-L-glutamyl-L-cysteine + ADP + phosphate + H(+). The protein operates within sulfur metabolism; glutathione biosynthesis; glutathione from L-cysteine and L-glutamate: step 1/2. In Shewanella oneidensis (strain ATCC 700550 / JCM 31522 / CIP 106686 / LMG 19005 / NCIMB 14063 / MR-1), this protein is Glutamate--cysteine ligase.